The primary structure comprises 106 residues: Transcriptional and immune response regulator (106 aa).

As to quaternary structure, monomer. Interacts with NOTCH2 (via ANK repeats), the interaction inhibits the nuclear translocation of NOTCH2 N2ICD. Interacts (C-terminus) with CBY1 (C-terminus), TCIM competes with CTNNB1 for the interaction with CBY1. As to expression, ubiquitous. Expressed in thyroid papillary carcinoma. Expressed in liver, expression levels decrease in hepatocellular carcinoma. Slightly detected in normal lung, its expression is highly induced in lung cancer cells (at protein level).

Its subcellular location is the cytoplasm. The protein localises to the nucleus. It localises to the nucleolus. The protein resides in the nucleus speckle. Functionally, seems to be involved in the regulation of cell growth an differentiation, may play different and opposite roles depending on the tissue or cell type. May enhance the WNT-CTNNB1 pathway by relieving antagonistic activity of CBY1. Enhances the proliferation of follicular dendritic cells. Plays a role in the mitogen-activated MAPK2/3 signaling pathway, positively regulates G1-to-S-phase transition of the cell cycle. In endothelial cells, enhances key inflammatory mediators and inflammatory response through the modulation of NF-kappaB transcriptional regulatory activity. Involved in the regulation of heat shock response, seems to play a positive feedback with HSF1 to modulate heat-shock downstream gene expression. Plays a role in the regulation of hematopoiesis even if the mechanisms are unknown. In cancers such as thyroid or lung cancer, it has been described as promoter of cell proliferation, G1-to-S-phase transition and inhibitor of apoptosis. However, it negatively regulates self-renewal of liver cancer cells via suppresion of NOTCH2 signaling. This is Transcriptional and immune response regulator from Homo sapiens (Human).